The chain runs to 707 residues: DNA ligase (707 aa).

A disordered region spans residues methionine 1–alanine 23. Residues aspartate 53–aspartate 57, serine 103–leucine 104, and glutamate 133 contribute to the NAD(+) site. Lysine 135 (N6-AMP-lysine intermediate) is an active-site residue. NAD(+) contacts are provided by arginine 156, glutamate 196, lysine 315, and lysine 339. The Zn(2+) site is built by cysteine 433, cysteine 436, cysteine 452, and cysteine 458. The region spanning serine 622–serine 707 is the BRCT domain.

Belongs to the NAD-dependent DNA ligase family. LigA subfamily. Mg(2+) is required as a cofactor. The cofactor is Mn(2+).

The catalysed reaction is NAD(+) + (deoxyribonucleotide)n-3'-hydroxyl + 5'-phospho-(deoxyribonucleotide)m = (deoxyribonucleotide)n+m + AMP + beta-nicotinamide D-nucleotide.. In terms of biological role, DNA ligase that catalyzes the formation of phosphodiester linkages between 5'-phosphoryl and 3'-hydroxyl groups in double-stranded DNA using NAD as a coenzyme and as the energy source for the reaction. It is essential for DNA replication and repair of damaged DNA. This Mycolicibacterium vanbaalenii (strain DSM 7251 / JCM 13017 / BCRC 16820 / KCTC 9966 / NRRL B-24157 / PYR-1) (Mycobacterium vanbaalenii) protein is DNA ligase.